Reading from the N-terminus, the 419-residue chain is Acyl-[acyl-carrier-protein] desaturase 6, chloroplastic (419 aa).

A chloroplast-targeting transit peptide spans 1-54 (MAATATMAMPLANRLRCKPNTNSSSPSRTLFGRRVTMISSSRWGSAVSGSAIMS). Fe cation-binding residues include E151, E189, H192, E242, E277, and H280.

This sequence belongs to the fatty acid desaturase type 2 family. Homodimer. Fe(2+) serves as cofactor.

It localises to the plastid. Its subcellular location is the chloroplast. The protein operates within lipid metabolism; fatty acid metabolism. Functionally, introduces a cis double bond in the acyl chain of an acyl-[acyl-carrier protein]. The polypeptide is Acyl-[acyl-carrier-protein] desaturase 6, chloroplastic (Oryza sativa subsp. japonica (Rice)).